Reading from the N-terminus, the 79-residue chain is Conotoxin TxMEKL-021 (79 aa).

A signal peptide spans 1–19 (MEKLTILLLVAVVLMSTQA). Residues 20–47 (LPQGGGEKRPRENIRFLSKRKSNAERWR) constitute a propeptide that is removed on maturation. Disulfide bonds link Cys51/Cys65, Cys58/Cys69, and Cys64/Cys75.

Belongs to the conotoxin O2 superfamily. In terms of tissue distribution, expressed by the venom duct.

It is found in the secreted. The chain is Conotoxin TxMEKL-021 from Conus textile (Cloth-of-gold cone).